A 537-amino-acid polypeptide reads, in one-letter code: Protein ST7 homolog (537 aa).

Residues 15 to 35 traverse the membrane as a helical segment; that stretch reads FYVALTGTSSLISGLILIFEW. A disordered region spans residues 61–111; that stretch reads SDGQSESSNGSGSSSSSGSSSSSNGGAGGGGSGGAGASGSGSATTSTGTQM. Residues 67–84 are compositionally biased toward low complexity; it reads SSNGSGSSSSSGSSSSSN. Gly residues predominate over residues 85–99; it reads GGAGGGGSGGAGASG. A compositionally biased stretch (low complexity) spans 100 to 109; the sequence is SGSATTSTGT. Residues 472 to 492 traverse the membrane as a helical segment; the sequence is LPFFILFTAGLCSITALLALA.

The protein belongs to the ST7 family.

The protein localises to the membrane. This chain is Protein ST7 homolog, found in Drosophila melanogaster (Fruit fly).